The chain runs to 230 residues: Cytidylate kinase (230 aa).

Residue Gly-12–Thr-20 participates in ATP binding.

The protein belongs to the cytidylate kinase family. Type 1 subfamily.

It localises to the cytoplasm. The enzyme catalyses CMP + ATP = CDP + ADP. It carries out the reaction dCMP + ATP = dCDP + ADP. This Shewanella loihica (strain ATCC BAA-1088 / PV-4) protein is Cytidylate kinase.